Consider the following 279-residue polypeptide: Sulfur carrier protein FdhD (279 aa).

C112 (cysteine persulfide intermediate) is an active-site residue.

It belongs to the FdhD family.

It is found in the cytoplasm. Its function is as follows. Required for formate dehydrogenase (FDH) activity. Acts as a sulfur carrier protein that transfers sulfur from IscS to the molybdenum cofactor prior to its insertion into FDH. The protein is Sulfur carrier protein FdhD of Nocardia farcinica (strain IFM 10152).